The sequence spans 109 residues: Large ribosomal subunit protein uL24 (109 aa).

The tract at residues 85–109 (KYGTDPKTNKKVRLSRKTNNLVGGQ) is disordered.

This sequence belongs to the universal ribosomal protein uL24 family. Part of the 50S ribosomal subunit.

Its function is as follows. One of two assembly initiator proteins, it binds directly to the 5'-end of the 23S rRNA, where it nucleates assembly of the 50S subunit. Functionally, one of the proteins that surrounds the polypeptide exit tunnel on the outside of the subunit. This is Large ribosomal subunit protein uL24 from Mycoplasmoides gallisepticum (strain R(low / passage 15 / clone 2)) (Mycoplasma gallisepticum).